The chain runs to 515 residues: Maturase K (515 aa).

This sequence belongs to the intron maturase 2 family. MatK subfamily.

It localises to the plastid. It is found in the chloroplast. Functionally, usually encoded in the trnK tRNA gene intron. Probably assists in splicing its own and other chloroplast group II introns. This Helonias bullata (Swamp pink) protein is Maturase K.